We begin with the raw amino-acid sequence, 372 residues long: 4-hydroxy-3-methylbut-2-en-1-yl diphosphate synthase (flavodoxin) (372 aa).

[4Fe-4S] cluster is bound by residues C270, C273, C305, and E312.

Belongs to the IspG family. [4Fe-4S] cluster serves as cofactor.

It carries out the reaction (2E)-4-hydroxy-3-methylbut-2-enyl diphosphate + oxidized [flavodoxin] + H2O + 2 H(+) = 2-C-methyl-D-erythritol 2,4-cyclic diphosphate + reduced [flavodoxin]. It participates in isoprenoid biosynthesis; isopentenyl diphosphate biosynthesis via DXP pathway; isopentenyl diphosphate from 1-deoxy-D-xylulose 5-phosphate: step 5/6. Its function is as follows. Converts 2C-methyl-D-erythritol 2,4-cyclodiphosphate (ME-2,4cPP) into 1-hydroxy-2-methyl-2-(E)-butenyl 4-diphosphate. The polypeptide is 4-hydroxy-3-methylbut-2-en-1-yl diphosphate synthase (flavodoxin) (Escherichia coli O8 (strain IAI1)).